Consider the following 183-residue polypeptide: Capsid protein (183 aa).

The segment at 136 to 183 (NAPILSTLPETTVVRRRGRSPRRRTPSPRRRRSQSPRRRRSQSRESQC) is disordered. A compositionally biased stretch (basic residues) spans 149–176 (VRRRGRSPRRRTPSPRRRRSQSPRRRRS). Residues S155, S162, and S170 each carry the phosphoserine; by host modification. The 1; half-length repeat unit spans residues 155–161 (SPRRRTP). The tract at residues 155-177 (SPRRRTPSPRRRRSQSPRRRRSQ) is 3 X 8 AA repeats of S-P-R-R-R-[PR]-S-Q. The Bipartite nuclear localization signal signature appears at 158–175 (RRTPSPRRRRSQSPRRRR). A run of 2 repeats spans residues 162–169 (SPRRRRSQ) and 170–177 (SPRRRRSQ). The tract at residues 177 to 183 (QSRESQC) is RNA binding.

The protein belongs to the orthohepadnavirus core antigen family. Homodimerizes, then multimerizes. Interacts with cytosol exposed regions of viral L glycoprotein present in the reticulum-to-Golgi compartment. Interacts with human FLNB. Phosphorylated form interacts with host importin alpha; this interaction depends on the exposure of the NLS, which itself depends upon genome maturation and/or phosphorylation of the capsid protein. Interacts with host NUP153. In terms of processing, phosphorylated by host SRPK1, SRPK2, and maybe protein kinase C or GAPDH. Phosphorylation is critical for pregenomic RNA packaging. Protein kinase C phosphorylation is stimulated by HBx protein and may play a role in transport of the viral genome to the nucleus at the late step during the viral replication cycle.

The protein resides in the virion. The protein localises to the host cytoplasm. In terms of biological role, self assembles to form an icosahedral capsid. Most capsids appear to be large particles with an icosahedral symmetry of T=4 and consist of 240 copies of capsid protein, though a fraction forms smaller T=3 particles consisting of 180 capsid proteins. Entering capsids are transported along microtubules to the nucleus. Phosphorylation of the capsid is thought to induce exposure of nuclear localization signal in the C-terminal portion of the capsid protein that allows binding to the nuclear pore complex via the importin (karyopherin-) alpha and beta. Capsids are imported in intact form through the nuclear pore into the nuclear basket, where it probably binds NUP153. Only capsids that contain the mature viral genome can release the viral DNA and capsid protein into the nucleoplasm. Immature capsids get stuck in the basket. Capsids encapsulate the pre-genomic RNA and the P protein. Pre-genomic RNA is reverse-transcribed into DNA while the capsid is still in the cytoplasm. The capsid can then either be directed to the nucleus, providing more genomes for transcription, or bud through the endoplasmic reticulum to provide new virions. This Homo sapiens (Human) protein is Capsid protein.